The primary structure comprises 563 residues: Inclusion membrane protein M (563 aa).

Residues 1–36 lie on the Cytoplasmic side of the membrane; sequence MVYFRAHQPRHTPKTFPLEVHHSFSDKHPQIAKAMR. A helical membrane pass occupies residues 37–57; it reads ITGIALAALSLLAVVACVIAV. Position 58 (Ser-58) is a topological domain, vacuolar. A helical membrane pass occupies residues 59–79; sequence AGGAAIPLAVISGIAVMSGLL. Residues 80–252 lie on the Cytoplasmic side of the membrane; the sequence is SAATIICSAK…VLKVALSLGV (173 aa). The helical transmembrane segment at 253-273 threads the bilayer; sequence LAGVAALIIFLPPSLPFIAVI. Gly-274 is a topological domain (vacuolar). A helical transmembrane segment spans residues 275-295; the sequence is VSSLALGMASFLMIRGIKYLL. Over 296-563 the chain is Cytoplasmic; sequence EHSPLNRKQL…QLAQYLLDNH (268 aa).

The protein belongs to the chlamydial CPn_0065/CT_288/TC_0561 family. As to quaternary structure, interacts with host CCDC146. In host cells infected with C.trachomatis incM, CCDC146 is recruited to the periphery of the pathogen-containing vacuole but recruitment is not dependent on incM.

The protein localises to the host vacuole. It is found in the host pathogen-containing vacuole. The protein resides in the host pathogen-containing vacuole membrane. It localises to the host pathogen-containing vacuole lumen. Its subcellular location is the secreted. In terms of biological role, interferes with host cell cytokinesis, centrosome positioning and Golgi distribution, and contributes to the morphology and stability of the pathogen-containing vacuole. May exert its effects by acting directly or indirectly on host microtubules. This chain is Inclusion membrane protein M, found in Chlamydia trachomatis serovar D (strain ATCC VR-885 / DSM 19411 / UW-3/Cx).